Consider the following 278-residue polypeptide: C-type lectin domain family 1 member A (278 aa).

Residues 1–42 are disordered; that stretch reads MLAKYSSTRDMLDADGDTTMSLHSQASATSQRPELGHTEHQR. The Cytoplasmic portion of the chain corresponds to 1 to 52; the sequence is MLAKYSSTRDMLDADGDTTMSLHSQASATSQRPELGHTEHQRPSSAWRPVAL. Positions 18–32 are enriched in polar residues; it reads TTMSLHSQASATSQR. A helical; Signal-anchor for type II membrane protein transmembrane segment spans residues 53 to 73; the sequence is ILLTLCLVLLIGLAALGLVFF. The Extracellular portion of the chain corresponds to 74–278; sequence QFYQLSNTQQ…LHEPLSRRWR (205 aa). Asn-95 and Asn-169 each carry an N-linked (GlcNAc...) asparagine glycan. The C-type lectin domain maps to 144–258; the sequence is HGDKCYQFYK…CRELRRCACE (115 aa). Disulfide bonds link Cys-165-Cys-257 and Cys-236-Cys-249.

It localises to the membrane. The sequence is that of C-type lectin domain family 1 member A (CLEC1A) from Bos taurus (Bovine).